The primary structure comprises 122 residues: Large ribosomal subunit protein bL12 (122 aa).

This sequence belongs to the bacterial ribosomal protein bL12 family. In terms of assembly, homodimer. Part of the ribosomal stalk of the 50S ribosomal subunit. Forms a multimeric L10(L12)X complex, where L10 forms an elongated spine to which 2 to 4 L12 dimers bind in a sequential fashion. Binds GTP-bound translation factors.

Forms part of the ribosomal stalk which helps the ribosome interact with GTP-bound translation factors. Is thus essential for accurate translation. The chain is Large ribosomal subunit protein bL12 from Staphylococcus aureus (strain Newman).